Reading from the N-terminus, the 336-residue chain is Flap endonuclease 1 (336 aa).

Positions 1 to 98 (MGVDLGDILS…GTLAARAQMK (98 aa)) are N-domain. The Mg(2+) site is built by Asp27, Asp80, Glu150, Glu152, Asp171, Asp173, and Asp234. The interval 114–255 (DSFRYAQATA…RALKLIREHG (142 aa)) is I-domain. Residues 328–336 (GQSTLERWL) are interaction with PCNA.

The protein belongs to the XPG/RAD2 endonuclease family. FEN1 subfamily. As to quaternary structure, interacts with PCNA. PCNA stimulates the nuclease activity without altering cleavage specificity. The cofactor is Mg(2+).

In terms of biological role, structure-specific nuclease with 5'-flap endonuclease and 5'-3' exonuclease activities involved in DNA replication and repair. During DNA replication, cleaves the 5'-overhanging flap structure that is generated by displacement synthesis when DNA polymerase encounters the 5'-end of a downstream Okazaki fragment. Binds the unpaired 3'-DNA end and kinks the DNA to facilitate 5' cleavage specificity. Cleaves one nucleotide into the double-stranded DNA from the junction in flap DNA, leaving a nick for ligation. Also involved in the base excision repair (BER) pathway. Acts as a genome stabilization factor that prevents flaps from equilibrating into structures that lead to duplications and deletions. Also possesses 5'-3' exonuclease activity on nicked or gapped double-stranded DNA. This chain is Flap endonuclease 1, found in Methanothrix thermoacetophila (strain DSM 6194 / JCM 14653 / NBRC 101360 / PT) (Methanosaeta thermophila).